Reading from the N-terminus, the 63-residue chain is Cecropin-A1 (63 aa).

An N-terminal signal peptide occupies residues 1–23 (MNFYNIFVFVALILAITIGQSEA). At R62 the chain carries Arginine amide.

This sequence belongs to the cecropin family.

The protein localises to the secreted. Functionally, cecropins have lytic and antibacterial activity against several Gram-positive and Gram-negative bacteria. The protein is Cecropin-A1 (CecA1) of Drosophila sechellia (Fruit fly).